The sequence spans 180 residues: Large ribosomal subunit protein uL5 (180 aa).

It belongs to the universal ribosomal protein uL5 family. Part of the 50S ribosomal subunit; part of the 5S rRNA/L5/L18/L25 subcomplex. Contacts the 5S rRNA and the P site tRNA. Forms a bridge to the 30S subunit in the 70S ribosome.

Its function is as follows. This is one of the proteins that bind and probably mediate the attachment of the 5S RNA into the large ribosomal subunit, where it forms part of the central protuberance. In the 70S ribosome it contacts protein S13 of the 30S subunit (bridge B1b), connecting the 2 subunits; this bridge is implicated in subunit movement. Contacts the P site tRNA; the 5S rRNA and some of its associated proteins might help stabilize positioning of ribosome-bound tRNAs. In Mycoplasma pneumoniae (strain ATCC 29342 / M129 / Subtype 1) (Mycoplasmoides pneumoniae), this protein is Large ribosomal subunit protein uL5.